The primary structure comprises 198 residues: Armadillo repeat-containing protein 7 (198 aa).

ARM repeat units follow at residues 57–99 (QVLD…HAGG) and 100–140 (VPLI…TATP). S169 carries the phosphoserine modification.

As to quaternary structure, component of the minor spliceosome. Within this complex, interacts with RBM48.

Its function is as follows. As a component of the minor spliceosome, involved in the splicing of U12-type introns in pre-mRNAs. This chain is Armadillo repeat-containing protein 7 (ARMC7), found in Homo sapiens (Human).